Consider the following 245-residue polypeptide: MIIPALDLIDGTVVRLHQGDYGKQRDYGNNPLPRLQDYAAQGAEVLHLVDLTGAKDPAKRQIPLIKTLVAGVNVPVQVGGGVRSEKDVAALLEAGVARVVVGSTAVKSPEMVKGWFERFGADALVLALDVRIDEQGNKQVAVSGWQENSGVSLEQLVETYLPVGLKHVLCTDISRDGTLAGSNVSLYEEVCARYPQVAFQSSGGIGDINDVAALRGTGVRGVIVGRALLEGKFTVKEAIACWQNA.

The Proton acceptor role is filled by Asp-7. Asp-129 acts as the Proton donor in catalysis.

Belongs to the HisA/HisF family.

It is found in the cytoplasm. The enzyme catalyses 1-(5-phospho-beta-D-ribosyl)-5-[(5-phospho-beta-D-ribosylamino)methylideneamino]imidazole-4-carboxamide = 5-[(5-phospho-1-deoxy-D-ribulos-1-ylimino)methylamino]-1-(5-phospho-beta-D-ribosyl)imidazole-4-carboxamide. It functions in the pathway amino-acid biosynthesis; L-histidine biosynthesis; L-histidine from 5-phospho-alpha-D-ribose 1-diphosphate: step 4/9. The protein is 1-(5-phosphoribosyl)-5-[(5-phosphoribosylamino)methylideneamino] imidazole-4-carboxamide isomerase of Escherichia coli O6:K15:H31 (strain 536 / UPEC).